A 537-amino-acid chain; its full sequence is Phosphoenolpyruvate carboxykinase (ATP) (537 aa).

Positions 61, 195, and 201 each coordinate substrate. Residues lysine 201, histidine 220, and 236-244 contribute to the ATP site; that span reads GLSGTGKTT. Residues lysine 201 and histidine 220 each coordinate Mn(2+). A Mn(2+)-binding site is contributed by aspartate 257. An ATP-binding site is contributed by glutamate 285. Residues 311–321 show a composition bias toward basic and acidic residues; the sequence is PDFDNGSKTEN. A disordered region spans residues 311–342; it reads PDFDNGSKTENTRSAYPLESIPNASPTGRAGQ. Arginine 323 serves as a coordination point for substrate. ATP is bound by residues arginine 323 and threonine 448.

The protein belongs to the phosphoenolpyruvate carboxykinase (ATP) family. Mn(2+) serves as cofactor.

The protein localises to the cytoplasm. It carries out the reaction oxaloacetate + ATP = phosphoenolpyruvate + ADP + CO2. The protein operates within carbohydrate biosynthesis; gluconeogenesis. In terms of biological role, involved in the gluconeogenesis. Catalyzes the conversion of oxaloacetate (OAA) to phosphoenolpyruvate (PEP) through direct phosphoryl transfer between the nucleoside triphosphate and OAA. This is Phosphoenolpyruvate carboxykinase (ATP) from Rhodopseudomonas palustris (strain BisB5).